The following is a 382-amino-acid chain: Mannitol-1-phosphate 5-dehydrogenase (382 aa).

Residue 3–14 (AIHFGAGNIGRG) coordinates NAD(+).

Belongs to the mannitol dehydrogenase family.

It carries out the reaction D-mannitol 1-phosphate + NAD(+) = beta-D-fructose 6-phosphate + NADH + H(+). This is Mannitol-1-phosphate 5-dehydrogenase from Psychromonas ingrahamii (strain DSM 17664 / CCUG 51855 / 37).